Reading from the N-terminus, the 132-residue chain is Small ribosomal subunit protein uS8 (132 aa).

It belongs to the universal ribosomal protein uS8 family. Part of the 30S ribosomal subunit. Contacts proteins S5 and S12.

In terms of biological role, one of the primary rRNA binding proteins, it binds directly to 16S rRNA central domain where it helps coordinate assembly of the platform of the 30S subunit. This Ligilactobacillus salivarius (strain UCC118) (Lactobacillus salivarius) protein is Small ribosomal subunit protein uS8.